Here is a 298-residue protein sequence, read N- to C-terminus: HTH-type transcriptional regulator CzcR (298 aa).

Residues 11–68 (MELRDLQIFQSVADQGSVSSAAKELNYVQSNVTARIKQLENELKTPLFYRHKRGMTLT) form the HTH lysR-type domain. A DNA-binding region (H-T-H motif) is located at residues 28–47 (VSSAAKELNYVQSNVTARIK).

Belongs to the LysR transcriptional regulatory family.

The polypeptide is HTH-type transcriptional regulator CzcR (czcR) (Bacillus thuringiensis (strain Al Hakam)).